Consider the following 459-residue polypeptide: GTPase Der (459 aa).

EngA-type G domains lie at 3-167 (FTLA…PEPV) and 188-363 (IRVA…AVWN). Residues 9 to 16 (GRPNVGKS), 56 to 60 (DTAGL), 119 to 122 (NKSE), 194 to 201 (GRPNAGKS), 241 to 245 (DTAGL), and 306 to 309 (NKWD) each bind GTP. In terms of domain architecture, KH-like spans 364 to 448 (RRVPTAALNR…PVRITLREKA (85 aa)).

It belongs to the TRAFAC class TrmE-Era-EngA-EngB-Septin-like GTPase superfamily. EngA (Der) GTPase family. Associates with the 50S ribosomal subunit.

In terms of biological role, GTPase that plays an essential role in the late steps of ribosome biogenesis. The polypeptide is GTPase Der (Rhodopseudomonas palustris (strain TIE-1)).